Here is a 295-residue protein sequence, read N- to C-terminus: Ribosomal protein L11 methyltransferase (295 aa).

S-adenosyl-L-methionine contacts are provided by threonine 138, glycine 161, aspartate 183, and asparagine 230.

The protein belongs to the methyltransferase superfamily. PrmA family.

The protein resides in the cytoplasm. It catalyses the reaction L-lysyl-[protein] + 3 S-adenosyl-L-methionine = N(6),N(6),N(6)-trimethyl-L-lysyl-[protein] + 3 S-adenosyl-L-homocysteine + 3 H(+). Its function is as follows. Methylates ribosomal protein L11. This is Ribosomal protein L11 methyltransferase from Rhodopseudomonas palustris (strain BisB5).